Here is a 380-residue protein sequence, read N- to C-terminus: Lipid-A-disaccharide synthase (380 aa).

Belongs to the LpxB family.

It catalyses the reaction a lipid X + a UDP-2-N,3-O-bis[(3R)-3-hydroxyacyl]-alpha-D-glucosamine = a lipid A disaccharide + UDP + H(+). The protein operates within bacterial outer membrane biogenesis; LPS lipid A biosynthesis. Functionally, condensation of UDP-2,3-diacylglucosamine and 2,3-diacylglucosamine-1-phosphate to form lipid A disaccharide, a precursor of lipid A, a phosphorylated glycolipid that anchors the lipopolysaccharide to the outer membrane of the cell. This chain is Lipid-A-disaccharide synthase, found in Pseudomonas syringae pv. syringae (strain B728a).